A 490-amino-acid chain; its full sequence is Delta(14)-sterol reductase (490 aa).

The next 7 helical transmembrane spans lie at 23–43 (FGGPIGAFGITFGLPILVHVF), 80–100 (VFGLFSWSATLWTLGYYALSL), 136–156 (LAILAAGTIAQGAEFPVWTFI), 160–180 (FAQIISANILFAFALAIFVYV), 230–250 (EFMEMRPGLLGWIILNCAFIA), 255–275 (LYGYVTDSILFITAIQAFYVF), and 324–344 (QLGAFGLIAVGAVLAAGYSIF). Residues Lys-351, Arg-355, Ile-378, Trp-383, and 390-391 (NY) each bind NADP(+). Residues 436-456 (ARGWGIVFTYFYILYFAILLI) traverse the membrane as a helical segment. NADP(+) contacts are provided by residues Asp-462, 466-470 (CSKKY), and Tyr-477.

It belongs to the ERG4/ERG24 family.

The protein resides in the membrane. The enzyme catalyses 4,4-dimethyl-5alpha-cholesta-8,24-dien-3beta-ol + NADP(+) = 4,4-dimethyl-5alpha-cholesta-8,14,24-trien-3beta-ol + NADPH + H(+). It functions in the pathway steroid biosynthesis; zymosterol biosynthesis; zymosterol from lanosterol: step 2/6. In terms of biological role, reduces the C14=C15 double bond of 4,4-dimethyl-cholesta-8,14,24-trienol to produce 4,4-dimethyl-cholesta-8,24-dienol. The polypeptide is Delta(14)-sterol reductase (erg-3) (Neurospora crassa (strain ATCC 24698 / 74-OR23-1A / CBS 708.71 / DSM 1257 / FGSC 987)).